The chain runs to 693 residues: Glycine--tRNA ligase beta subunit (693 aa).

This sequence belongs to the class-II aminoacyl-tRNA synthetase family. As to quaternary structure, tetramer of two alpha and two beta subunits.

The protein localises to the cytoplasm. It carries out the reaction tRNA(Gly) + glycine + ATP = glycyl-tRNA(Gly) + AMP + diphosphate. The chain is Glycine--tRNA ligase beta subunit from Shouchella clausii (strain KSM-K16) (Alkalihalobacillus clausii).